The following is a 467-amino-acid chain: tRNA modification GTPase MnmE (467 aa).

Residues Arg-30, Glu-92, and Arg-131 each contribute to the (6S)-5-formyl-5,6,7,8-tetrahydrofolate site. In terms of domain architecture, TrmE-type G spans 226-388 (GLKVAIIGRP…LEAAILNAVN (163 aa)). A K(+)-binding site is contributed by Asn-236. GTP contacts are provided by residues 236–241 (NVGKSS), 255–261 (TDLPGTT), and 280–283 (DTAG). Position 240 (Ser-240) interacts with Mg(2+). The K(+) site is built by Thr-255, Leu-257, and Thr-260. Mg(2+) is bound at residue Thr-261. Lys-467 lines the (6S)-5-formyl-5,6,7,8-tetrahydrofolate pocket.

Belongs to the TRAFAC class TrmE-Era-EngA-EngB-Septin-like GTPase superfamily. TrmE GTPase family. In terms of assembly, homodimer. Heterotetramer of two MnmE and two MnmG subunits. K(+) is required as a cofactor.

It localises to the cytoplasm. Its function is as follows. Exhibits a very high intrinsic GTPase hydrolysis rate. Involved in the addition of a carboxymethylaminomethyl (cmnm) group at the wobble position (U34) of certain tRNAs, forming tRNA-cmnm(5)s(2)U34. This Trichodesmium erythraeum (strain IMS101) protein is tRNA modification GTPase MnmE.